The chain runs to 126 residues: Fluoride-specific ion channel FluC (126 aa).

Transmembrane regions (helical) follow at residues 4 to 24 (PLLS…LLGL), 33 to 53 (IPLG…FAMA), 67 to 87 (FVIT…IEIV), and 97 to 117 (MAML…CLGL). 2 residues coordinate Na(+): G74 and T77.

This sequence belongs to the fluoride channel Fluc/FEX (TC 1.A.43) family.

The protein resides in the cell inner membrane. It carries out the reaction fluoride(in) = fluoride(out). With respect to regulation, na(+) is not transported, but it plays an essential structural role and its presence is essential for fluoride channel function. In terms of biological role, fluoride-specific ion channel. Important for reducing fluoride concentration in the cell, thus reducing its toxicity. This chain is Fluoride-specific ion channel FluC, found in Acinetobacter baumannii (strain ACICU).